The chain runs to 363 residues: Pyruvate dehydrogenase E1 component subunit beta-1, mitochondrial (363 aa).

The transit peptide at 1–29 directs the protein to the mitochondrion; that stretch reads MLGILRQRAIDGASTLRRTRFALVSARSY. Glu-92 lines the thiamine diphosphate pocket. Residues Ile-145, Ala-193, Ile-194, and Asp-196 each coordinate K(+). Residues Lys-247 and Lys-254 each participate in a glycyl lysine isopeptide (Lys-Gly) (interchain with G-Cter in ubiquitin) cross-link.

As to quaternary structure, tetramer of 2 alpha and 2 beta subunits. Thiamine diphosphate serves as cofactor. As to expression, expressed in roots, immature rosettes, and mature rosettes.

The protein resides in the mitochondrion matrix. The enzyme catalyses N(6)-[(R)-lipoyl]-L-lysyl-[protein] + pyruvate + H(+) = N(6)-[(R)-S(8)-acetyldihydrolipoyl]-L-lysyl-[protein] + CO2. Its function is as follows. The pyruvate dehydrogenase complex catalyzes the overall conversion of pyruvate to acetyl-CoA and CO(2). It contains multiple copies of three enzymatic components: pyruvate dehydrogenase (E1), dihydrolipoamide acetyltransferase (E2) and lipoamide dehydrogenase (E3). This chain is Pyruvate dehydrogenase E1 component subunit beta-1, mitochondrial (PDH2), found in Arabidopsis thaliana (Mouse-ear cress).